Reading from the N-terminus, the 566-residue chain is Cyclin G (566 aa).

The region spanning 285 to 368 is the Cyclin N-terminal domain; that stretch reads MWYELPSDVL…VIANKLGVQM (84 aa).

Belongs to the cyclin family. Cyclin G subfamily. Interacts with corto. Interacts with the cyclin-dependent kinases Cdk2 and Cdk4. Interacts with Brca2 and Rad9. Interacts with polycomb protein Asx. Interacts with protein phosphatase 2A subunit wdb.

It is found in the chromosome. Functionally, cyclin with roles in multiple processes including transcription, meiotic recombination repair, cell cycle regulation, and promotion of normal growth and metabolism. Binds to the promoter region of the homeobox gene Abd-B and is involved in maintaining Abd-B expression in the pupal epithelium. Involved in the transcriptional repression of the homeotic genes Scr and Ubx. Plays a role in meiotic recombination repair of DNA double-strand breaks which ensures efficient translation of grk and promotes grk activity in the oocyte, leading to oocyte dorso-ventral axis formation following secretion of grk from the oocyte and its binding to Egfr in the directly overlying follicle cells. Negatively regulates the binding of serine/threonine-protein kinase Akt1 to the protein phosphatase 2A subunit wdb, promoting normal growth and metabolism. Required for the formation of bilateral symmetry. Negatively regulates cell cycle progression by preventing G1 to S transition and retarding S-phase progression. The polypeptide is Cyclin G (Drosophila melanogaster (Fruit fly)).